We begin with the raw amino-acid sequence, 295 residues long: Ribosomal RNA small subunit methyltransferase A (295 aa).

6 residues coordinate S-adenosyl-L-methionine: Asn29, Leu31, Gly56, Glu77, Asp102, and Asn128.

Belongs to the class I-like SAM-binding methyltransferase superfamily. rRNA adenine N(6)-methyltransferase family. RsmA subfamily.

The protein localises to the cytoplasm. It carries out the reaction adenosine(1518)/adenosine(1519) in 16S rRNA + 4 S-adenosyl-L-methionine = N(6)-dimethyladenosine(1518)/N(6)-dimethyladenosine(1519) in 16S rRNA + 4 S-adenosyl-L-homocysteine + 4 H(+). Its function is as follows. Specifically dimethylates two adjacent adenosines (A1518 and A1519) in the loop of a conserved hairpin near the 3'-end of 16S rRNA in the 30S particle. May play a critical role in biogenesis of 30S subunits. The protein is Ribosomal RNA small subunit methyltransferase A of Listeria innocua serovar 6a (strain ATCC BAA-680 / CLIP 11262).